Reading from the N-terminus, the 150-residue chain is MLKTVNILNKRAKFEYEIIDRYTAGMVLTGTEIKSIRLGKANIAESFCEFQGDELFVINSHIEEYLFGHQYNHKPKSERKLLLNKRELKGLLKDVQNKGLTIIPLRLFTNEKGMAKLDIALCKGKKTFDKRETIKDRDNKRDLDRIKKEF.

Belongs to the SmpB family.

It localises to the cytoplasm. Its function is as follows. Required for rescue of stalled ribosomes mediated by trans-translation. Binds to transfer-messenger RNA (tmRNA), required for stable association of tmRNA with ribosomes. tmRNA and SmpB together mimic tRNA shape, replacing the anticodon stem-loop with SmpB. tmRNA is encoded by the ssrA gene; the 2 termini fold to resemble tRNA(Ala) and it encodes a 'tag peptide', a short internal open reading frame. During trans-translation Ala-aminoacylated tmRNA acts like a tRNA, entering the A-site of stalled ribosomes, displacing the stalled mRNA. The ribosome then switches to translate the ORF on the tmRNA; the nascent peptide is terminated with the 'tag peptide' encoded by the tmRNA and targeted for degradation. The ribosome is freed to recommence translation, which seems to be the essential function of trans-translation. The polypeptide is SsrA-binding protein (Flavobacterium psychrophilum (strain ATCC 49511 / DSM 21280 / CIP 103535 / JIP02/86)).